Reading from the N-terminus, the 100-residue chain is Urease subunit gamma (100 aa).

This sequence belongs to the urease gamma subunit family. In terms of assembly, heterotrimer of UreA (gamma), UreB (beta) and UreC (alpha) subunits. Three heterotrimers associate to form the active enzyme.

The protein localises to the cytoplasm. It carries out the reaction urea + 2 H2O + H(+) = hydrogencarbonate + 2 NH4(+). It functions in the pathway nitrogen metabolism; urea degradation; CO(2) and NH(3) from urea (urease route): step 1/1. The protein is Urease subunit gamma of Burkholderia cenocepacia (strain ATCC BAA-245 / DSM 16553 / LMG 16656 / NCTC 13227 / J2315 / CF5610) (Burkholderia cepacia (strain J2315)).